The chain runs to 91 residues: Mercuric transport protein periplasmic component (91 aa).

Residues 1–19 (MKKLFASLALAAVVAPVWA) form the signal peptide. The 67-residue stretch at 22–88 (QTVTLSVPGM…ATADAGYPSS (67 aa)) folds into the HMA domain. Residues Cys33 and Cys36 each coordinate Hg(2+).

It belongs to the MerP family. As to quaternary structure, monomer.

Its subcellular location is the periplasm. Functionally, involved in mercury resistance. Acts as a mercury scavenger that specifically binds to a mercuric ion in the periplasm and probably passes it to the cytoplasmic mercuric reductase MerA via the mercuric transport protein MerT. This chain is Mercuric transport protein periplasmic component, found in Pseudomonas aeruginosa.